Reading from the N-terminus, the 109-residue chain is ATP-dependent Clp protease adapter protein ClpS (109 aa).

Residues M1–T25 are disordered.

The protein belongs to the ClpS family. Binds to the N-terminal domain of the chaperone ClpA.

Its function is as follows. Involved in the modulation of the specificity of the ClpAP-mediated ATP-dependent protein degradation. This chain is ATP-dependent Clp protease adapter protein ClpS, found in Phenylobacterium zucineum (strain HLK1).